Here is a 305-residue protein sequence, read N- to C-terminus: Methionyl-tRNA formyltransferase (305 aa).

Residue 111–114 (SLLP) participates in (6S)-5,6,7,8-tetrahydrofolate binding.

This sequence belongs to the Fmt family.

The catalysed reaction is L-methionyl-tRNA(fMet) + (6R)-10-formyltetrahydrofolate = N-formyl-L-methionyl-tRNA(fMet) + (6S)-5,6,7,8-tetrahydrofolate + H(+). Its function is as follows. Attaches a formyl group to the free amino group of methionyl-tRNA(fMet). The formyl group appears to play a dual role in the initiator identity of N-formylmethionyl-tRNA by promoting its recognition by IF2 and preventing the misappropriation of this tRNA by the elongation apparatus. The chain is Methionyl-tRNA formyltransferase from Helicobacter pylori (strain P12).